Consider the following 361-residue polypeptide: Histidinol-phosphate aminotransferase (361 aa).

Lys224 bears the N6-(pyridoxal phosphate)lysine mark.

It belongs to the class-II pyridoxal-phosphate-dependent aminotransferase family. Histidinol-phosphate aminotransferase subfamily. As to quaternary structure, homodimer. The cofactor is pyridoxal 5'-phosphate.

It carries out the reaction L-histidinol phosphate + 2-oxoglutarate = 3-(imidazol-4-yl)-2-oxopropyl phosphate + L-glutamate. It participates in amino-acid biosynthesis; L-histidine biosynthesis; L-histidine from 5-phospho-alpha-D-ribose 1-diphosphate: step 7/9. The chain is Histidinol-phosphate aminotransferase from Bacillus licheniformis (strain ATCC 14580 / DSM 13 / JCM 2505 / CCUG 7422 / NBRC 12200 / NCIMB 9375 / NCTC 10341 / NRRL NRS-1264 / Gibson 46).